The chain runs to 231 residues: NADH-ubiquinone oxidoreductase chain 4 (231 aa).

6 consecutive transmembrane segments (helical) span residues P1–I21, L34–L54, I63–G85, A89–Y111, G124–I146, and T169–L189.

It belongs to the complex I subunit 4 family.

It is found in the mitochondrion membrane. The catalysed reaction is a ubiquinone + NADH + 5 H(+)(in) = a ubiquinol + NAD(+) + 4 H(+)(out). Core subunit of the mitochondrial membrane respiratory chain NADH dehydrogenase (Complex I) that is believed to belong to the minimal assembly required for catalysis. Complex I functions in the transfer of electrons from NADH to the respiratory chain. The immediate electron acceptor for the enzyme is believed to be ubiquinone. This is NADH-ubiquinone oxidoreductase chain 4 (MT-ND4) from Crotalus lepidus (Banded rock rattlesnake).